Here is a 165-residue protein sequence, read N- to C-terminus: HTH-type transcriptional regulator IscR (165 aa).

Residues 2-131 (RLTSKGRYAV…NNITLAELVS (130 aa)) form the HTH rrf2-type domain. The H-T-H motif DNA-binding region spans 28–51 (LAEISERQGISLSYLEQLFSRLRK). Residues Cys92, Cys98, and Cys104 each coordinate [2Fe-2S] cluster. Positions 144-165 (NDTRRPLTNGRPQETINVNLHA) are disordered. A compositionally biased stretch (polar residues) spans 153 to 165 (GRPQETINVNLHA).

[2Fe-2S] cluster serves as cofactor.

In terms of biological role, regulates the transcription of several operons and genes involved in the biogenesis of Fe-S clusters and Fe-S-containing proteins. The sequence is that of HTH-type transcriptional regulator IscR from Sodalis glossinidius (strain morsitans).